The chain runs to 577 residues: Beta-fructofuranosidase, insoluble isoenzyme 1 (577 aa).

The first 22 residues, 1-22 (MGTRLLALAPWLLLLLLQLAGA), serve as a signal peptide directing secretion. Aspartate 63 is an active-site residue. 3 N-linked (GlcNAc...) asparagine glycosylation sites follow: asparagine 158, asparagine 183, and asparagine 333.

This sequence belongs to the glycosyl hydrolase 32 family. Expressed in roots, leaves and flowers. Weakly expressed in seeds.

The protein localises to the secreted. Its subcellular location is the extracellular space. It is found in the apoplast. The protein resides in the cell wall. The catalysed reaction is Hydrolysis of terminal non-reducing beta-D-fructofuranoside residues in beta-D-fructofuranosides.. May play a role in sucrose partitioning during seed development and in stress response. The chain is Beta-fructofuranosidase, insoluble isoenzyme 1 (CIN1) from Oryza sativa subsp. japonica (Rice).